Reading from the N-terminus, the 366-residue chain is 3-isopropylmalate dehydrogenase (366 aa).

Gly-78 to Glu-91 is a binding site for NAD(+). Arg-99, Arg-109, Arg-138, and Asp-227 together coordinate substrate. Mg(2+) contacts are provided by Asp-227, Asp-251, and Asp-255. NAD(+) is bound at residue Gly-285–Asn-297.

It belongs to the isocitrate and isopropylmalate dehydrogenases family. LeuB type 1 subfamily. In terms of assembly, homodimer. The cofactor is Mg(2+). Mn(2+) serves as cofactor.

It is found in the cytoplasm. The enzyme catalyses (2R,3S)-3-isopropylmalate + NAD(+) = 4-methyl-2-oxopentanoate + CO2 + NADH. It participates in amino-acid biosynthesis; L-leucine biosynthesis; L-leucine from 3-methyl-2-oxobutanoate: step 3/4. Catalyzes the oxidation of 3-carboxy-2-hydroxy-4-methylpentanoate (3-isopropylmalate) to 3-carboxy-4-methyl-2-oxopentanoate. The product decarboxylates to 4-methyl-2 oxopentanoate. This chain is 3-isopropylmalate dehydrogenase, found in Blochmanniella pennsylvanica (strain BPEN).